The following is a 174-amino-acid chain: Membrane protein NfeD2 (174 aa).

3 helical membrane-spanning segments follow: residues 16–36, 47–67, and 72–92; these read LIIA…FSGL, LVLS…LVLP, and LIAL…HIFV.

The protein belongs to the NfeD family.

Its subcellular location is the cell membrane. It is found in the membrane raft. In terms of biological role, plays a role in assembly of FloT membrane rafts, probably recruited to rafts by FloT. This chain is Membrane protein NfeD2, found in Bacillus subtilis (strain 168).